We begin with the raw amino-acid sequence, 329 residues long: MTYLAETVTLNNGEKMPLVGLGCWKMPNDVCADQIYEAIKIGYRLFDGAQDYANEKEVGQGVNRAIKEGLVKREDLVVVSKLWNSFHHPDNVPRALERTLSDLQLDYVDIFYIHFPLAFKPVPFDEKYPPGFYTGKEDEAKGHIEEEQVPLLDTWRALEKLVDQGKIKSLGISNFSGALIQDLLRGARIKPVALQIEHHPYLTQERLIKYVKNAGIQVVAYSSFGPVSFLELENKKALNTPTLFEHDTIKSIASKHKVTPQQVLLRWATQNGIAIIPKSSKKERLLDNLRINDALTLTDDELKQISGLNQNIRFNDPWEWLDNEFPTFI.

Tyr-52 acts as the Proton donor in catalysis. Residue His-114 participates in substrate binding. Residues 173–174, 222–231, and 278–288 each bind NAD(+); these read SN, SSFGPVSFLE, and KSSKKERLLDN.

Belongs to the aldo/keto reductase family.

It carries out the reaction xylitol + NAD(+) = D-xylose + NADH + H(+). The enzyme catalyses xylitol + NADP(+) = D-xylose + NADPH + H(+). It participates in carbohydrate metabolism; D-xylose degradation. Functionally, reduces D-xylose into xylitol. This is NAD(P)H-dependent D-xylose reductase (XYL1) from Kluyveromyces lactis (strain ATCC 8585 / CBS 2359 / DSM 70799 / NBRC 1267 / NRRL Y-1140 / WM37) (Yeast).